Reading from the N-terminus, the 208-residue chain is Small ribosomal subunit protein uS4 (208 aa).

In terms of domain architecture, S4 RNA-binding spans 98 to 158 (GRLDNVVYRM…EKSKKQARIK (61 aa)).

This sequence belongs to the universal ribosomal protein uS4 family. Part of the 30S ribosomal subunit. Contacts protein S5. The interaction surface between S4 and S5 is involved in control of translational fidelity.

Functionally, one of the primary rRNA binding proteins, it binds directly to 16S rRNA where it nucleates assembly of the body of the 30S subunit. In terms of biological role, with S5 and S12 plays an important role in translational accuracy. The polypeptide is Small ribosomal subunit protein uS4 (Actinobacillus pleuropneumoniae serotype 5b (strain L20)).